Reading from the N-terminus, the 271-residue chain is Phosphoribosylformylglycinamidine synthase subunit PurQ (271 aa).

One can recognise a Glutamine amidotransferase type-1 domain in the interval 7-253 (KVAVLRMEGT…FGYQVGRREG (247 aa)). Residue Cys104 is the Nucleophile of the active site. Active-site residues include His238 and Glu240.

Part of the FGAM synthase complex composed of 1 PurL, 1 PurQ and 2 PurS subunits.

It localises to the cytoplasm. It catalyses the reaction N(2)-formyl-N(1)-(5-phospho-beta-D-ribosyl)glycinamide + L-glutamine + ATP + H2O = 2-formamido-N(1)-(5-O-phospho-beta-D-ribosyl)acetamidine + L-glutamate + ADP + phosphate + H(+). The catalysed reaction is L-glutamine + H2O = L-glutamate + NH4(+). It participates in purine metabolism; IMP biosynthesis via de novo pathway; 5-amino-1-(5-phospho-D-ribosyl)imidazole from N(2)-formyl-N(1)-(5-phospho-D-ribosyl)glycinamide: step 1/2. Part of the phosphoribosylformylglycinamidine synthase complex involved in the purines biosynthetic pathway. Catalyzes the ATP-dependent conversion of formylglycinamide ribonucleotide (FGAR) and glutamine to yield formylglycinamidine ribonucleotide (FGAM) and glutamate. The FGAM synthase complex is composed of three subunits. PurQ produces an ammonia molecule by converting glutamine to glutamate. PurL transfers the ammonia molecule to FGAR to form FGAM in an ATP-dependent manner. PurS interacts with PurQ and PurL and is thought to assist in the transfer of the ammonia molecule from PurQ to PurL. The protein is Phosphoribosylformylglycinamidine synthase subunit PurQ of Archaeoglobus fulgidus (strain ATCC 49558 / DSM 4304 / JCM 9628 / NBRC 100126 / VC-16).